We begin with the raw amino-acid sequence, 297 residues long: Pantothenate synthetase (297 aa).

30–37 (MGYLHAGH) contacts ATP. The active-site Proton donor is H37. Residue Q61 coordinates (R)-pantoate. A beta-alanine-binding site is contributed by Q61. ATP is bound at residue 147 to 150 (GEKD). Q153 provides a ligand contact to (R)-pantoate. ATP contacts are provided by residues V176 and 184–187 (LSSR).

This sequence belongs to the pantothenate synthetase family. In terms of assembly, homodimer.

The protein localises to the cytoplasm. It carries out the reaction (R)-pantoate + beta-alanine + ATP = (R)-pantothenate + AMP + diphosphate + H(+). It participates in cofactor biosynthesis; (R)-pantothenate biosynthesis; (R)-pantothenate from (R)-pantoate and beta-alanine: step 1/1. Catalyzes the condensation of pantoate with beta-alanine in an ATP-dependent reaction via a pantoyl-adenylate intermediate. The chain is Pantothenate synthetase from Rhizobium etli (strain ATCC 51251 / DSM 11541 / JCM 21823 / NBRC 15573 / CFN 42).